Reading from the N-terminus, the 263-residue chain is Neuferricin (263 aa).

Residues 1-22 form the signal peptide; sequence MLRICGLGVVLSLAVAAVAVMA. The Cytochrome b5 heme-binding domain occupies 35–134; it reads IRLFLPEELA…KNYVFVGRLV (100 aa). Residues 220-249 form a disordered region; that stretch reads VRTTGPPSDQQDNPRHSNHGDLDNPNLEEY. The segment covering 231-241 has biased composition (basic and acidic residues); sequence DNPRHSNHGDL.

This sequence belongs to the cytochrome b5 family. MAPR subfamily. As to expression, expressed in various tissues including brain, heart, adrenal gland, and kidney. In the brain, mainly expressed in pyramidal cells around the CA3 region of Ammon horn in hippocampus. Present in brain (at protein level).

The protein localises to the secreted. Functionally, heme-binding protein which promotes neuronal but not astrocyte differentiation. This Mus musculus (Mouse) protein is Neuferricin.